The primary structure comprises 282 residues: Bifunctional protein FolD (282 aa).

Residues 167–169 and Ser-192 contribute to the NADP(+) site; that span reads GRS.

This sequence belongs to the tetrahydrofolate dehydrogenase/cyclohydrolase family. As to quaternary structure, homodimer.

The catalysed reaction is (6R)-5,10-methylene-5,6,7,8-tetrahydrofolate + NADP(+) = (6R)-5,10-methenyltetrahydrofolate + NADPH. The enzyme catalyses (6R)-5,10-methenyltetrahydrofolate + H2O = (6R)-10-formyltetrahydrofolate + H(+). It functions in the pathway one-carbon metabolism; tetrahydrofolate interconversion. Its function is as follows. Catalyzes the oxidation of 5,10-methylenetetrahydrofolate to 5,10-methenyltetrahydrofolate and then the hydrolysis of 5,10-methenyltetrahydrofolate to 10-formyltetrahydrofolate. This chain is Bifunctional protein FolD, found in Acidobacterium capsulatum (strain ATCC 51196 / DSM 11244 / BCRC 80197 / JCM 7670 / NBRC 15755 / NCIMB 13165 / 161).